A 228-amino-acid polypeptide reads, in one-letter code: uncharacterized protein (228 aa).

Residues Ser-194–Glu-228 form a disordered region.

This is an uncharacterized protein from Treponema pallidum (strain Nichols).